The chain runs to 463 residues: Peptidase inhibitor 16 (463 aa).

An N-terminal signal peptide occupies residues 1–27; sequence MHGSCSFLMLLLPLLLLLVATTGPVGA. In terms of domain architecture, SCP spans 37 to 165; the sequence is VELHNLYRAQ…TNIELLVCNY (129 aa). An N-linked (GlcNAc...) asparagine glycan is attached at N114. Disordered regions lie at residues 262–281, 303–341, and 383–408; these read TQAP…TEAP, EPVT…DPKM, and LQAT…SATA. The segment covering 318–327 has biased composition (basic and acidic residues); sequence SADKVTDKTK. The O-glycosylated at one site stretch occupies residues 386–395; sequence TLDHTGHTSS. Over residues 392-408 the composition is skewed to polar residues; the sequence is HTSSKSLPNFPNTSATA. Residues N403 and N409 are each glycosylated (N-linked (GlcNAc...) asparagine).

The protein belongs to the CRISP family. In terms of assembly, interacts with PSP94/MSMB. In terms of processing, N- and O-glycosylated. O-glycosylated with core 1 or possibly core 8 glycans. In terms of tissue distribution, expressed in prostate, testis, ovary and intestine. Concentrates in prostate cancer patient's sera.

The protein localises to the secreted. Functionally, may inhibit cardiomyocyte growth. This chain is Peptidase inhibitor 16 (PI16), found in Homo sapiens (Human).